Consider the following 377-residue polypeptide: MDSALSDPHNGSAEAGGPTNSTTRPPSTPEGIALAYGSLLLMALLPIFFGALRSVRCARGKNASDMPETITSRDAARFPIIASCTLLGLYLFFKIFSQEYINLLLSMYFFVLGILALSHTISPFMNKFFPASFPNRQYQLLFTQGSGENKEEIINYEFDTKDLVCLGLSSIVGVWYLLRKHWIANNLFGLAFSLNGVELLHLNNVSTGCILLGGLFIYDVFWVFGTNVMVTVAKSFEAPIKLVFPQDLLEKGLEANNFAMLGLGDVVIPGIFIALLLRFDISLKKNTHTYFYTSFAAYIFGLGLTIFIMHIFKHAQPALLYLVPACIGFPVLVALAKGEVTEMFSYEESNPKDPAAVTESKEGTEASASKGLEKKEK.

The segment at 1–27 is disordered; sequence MDSALSDPHNGSAEAGGPTNSTTRPPS. Over 1–31 the chain is Lumenal; that stretch reads MDSALSDPHNGSAEAGGPTNSTTRPPSTPEG. N10 and N20 each carry an N-linked (GlcNAc...) asparagine glycan. Residues 32-52 form a helical membrane-spanning segment; sequence IALAYGSLLLMALLPIFFGAL. Residues 53–77 are Cytoplasmic-facing; sequence RSVRCARGKNASDMPETITSRDAAR. Residues 78–98 form a helical membrane-spanning segment; that stretch reads FPIIASCTLLGLYLFFKIFSQ. Residues 99-100 are Lumenal-facing; it reads EY. Residues 101-121 traverse the membrane as a helical segment; sequence INLLLSMYFFVLGILALSHTI. Residues 122–157 lie on the Cytoplasmic side of the membrane; the sequence is SPFMNKFFPASFPNRQYQLLFTQGSGENKEEIINYE. Residues 158-178 traverse the membrane as a helical segment; sequence FDTKDLVCLGLSSIVGVWYLL. Over 179–181 the chain is Lumenal; that stretch reads RKH. The chain crosses the membrane as a helical span at residues 182 to 202; the sequence is WIANNLFGLAFSLNGVELLHL. Residues 203–209 lie on the Cytoplasmic side of the membrane; sequence NNVSTGC. Residues 210–230 form a helical membrane-spanning segment; that stretch reads ILLGGLFIYDVFWVFGTNVMV. Residue D219 is part of the active site. The Lumenal segment spans residues 231 to 256; the sequence is TVAKSFEAPIKLVFPQDLLEKGLEAN. A helical transmembrane segment spans residues 257-277; sequence NFAMLGLGDVVIPGIFIALLL. Residue D265 is part of the active site. At 278–290 the chain is on the cytoplasmic side; sequence RFDISLKKNTHTY. Residues 291 to 311 traverse the membrane as a helical segment; that stretch reads FYTSFAAYIFGLGLTIFIMHI. Residues 312 to 314 are Lumenal-facing; that stretch reads FKH. A helical transmembrane segment spans residues 315–335; the sequence is AQPALLYLVPACIGFPVLVAL. A PAL motif is present at residues 317-319; the sequence is PAL. Residues 336–377 are Cytoplasmic-facing; sequence AKGEVTEMFSYEESNPKDPAAVTESKEGTEASASKGLEKKEK. The disordered stretch occupies residues 345–377; sequence SYEESNPKDPAAVTESKEGTEASASKGLEKKEK. S367 is modified (phosphoserine).

The protein belongs to the peptidase A22B family. In terms of assembly, monomer. Homodimer. Interacts with RNF139. Interacts with DERL1 and XBP1 isoform 1. In terms of processing, N-glycosylated. Widely expressed with highest levels in kidney, liver, placenta, lung, leukocytes and small intestine and reduced expression in heart and skeletal muscle. Expressed abundantly in the CNS with highest levels in thalamus and medulla.

Its subcellular location is the endoplasmic reticulum membrane. It is found in the membrane. The protein localises to the cell membrane. Catalyzes intramembrane proteolysis of signal peptides that have been removed from precursors of secretory and membrane proteins, resulting in the release of the fragment from the ER membrane into the cytoplasm. Required to generate lymphocyte cell surface (HLA-E) epitopes derived from MHC class I signal peptides. May be necessary for the removal of the signal peptide that remains attached to the hepatitis C virus core protein after the initial proteolytic processing of the polyprotein. Involved in the intramembrane cleavage of the integral membrane protein PSEN1. Cleaves the integral membrane protein XBP1 isoform 1 in a DERL1/RNF139-dependent manner. May play a role in graft rejection. In Homo sapiens (Human), this protein is Signal peptide peptidase.